A 145-amino-acid chain; its full sequence is 3-hydroxyacyl-[acyl-carrier-protein] dehydratase FabZ (145 aa).

The active site involves H47.

Belongs to the thioester dehydratase family. FabZ subfamily.

The protein localises to the cytoplasm. The catalysed reaction is a (3R)-hydroxyacyl-[ACP] = a (2E)-enoyl-[ACP] + H2O. Its function is as follows. Involved in unsaturated fatty acids biosynthesis. Catalyzes the dehydration of short chain beta-hydroxyacyl-ACPs and long chain saturated and unsaturated beta-hydroxyacyl-ACPs. This is 3-hydroxyacyl-[acyl-carrier-protein] dehydratase FabZ from Polaromonas sp. (strain JS666 / ATCC BAA-500).